The primary structure comprises 182 residues: ADP-ribosylation factor-like protein 3 (182 aa).

Gly-2 is lipidated: N-myristoyl glycine. At Ser-5 the chain carries Phosphoserine. Residues 24–31 (GLDNAGKT), Thr-48, 67–71 (DIGGQ), Gly-70, 126–129 (NKQD), and 159–161 (SAL) each bind GTP. Mg(2+) contacts are provided by Thr-31 and Thr-48.

Belongs to the small GTPase superfamily. Arf family. Found in a complex with ARL3, RP2 and UNC119 (or UNC119B); RP2 induces hydrolysis of GTP ARL3 in the complex, leading to the release of UNC119 (or UNC119B). Interacts with RP2; interaction is direct and stimulated with the activated GTP-bound form of ARL3. Interacts with SYS1. Interacts with ARL2BP; the GTP-bound form interacts with ARL2BP. Microtubule-associated protein. Does not interact with TBCC. Interacts with RP2. Interacts with PDE6D; the interaction occurs specifically with the GTP-bound form of ARL3. Interacts with GGA1; the interaction recruits PKD1:PKD2 complex to trans-Golgi network and is required for ciliary targeting of PKD1:PKD2 complex. Interacts with DNAAF9.

It localises to the golgi apparatus membrane. The protein resides in the cytoplasm. It is found in the cytoskeleton. The protein localises to the spindle. Its subcellular location is the nucleus. It localises to the microtubule organizing center. The protein resides in the centrosome. It is found in the cell projection. The protein localises to the cilium. Small GTP-binding protein which cycles between an inactive GDP-bound and an active GTP-bound form, and the rate of cycling is regulated by guanine nucleotide exchange factors (GEF) and GTPase-activating proteins (GAP). Required for normal cytokinesis and cilia signaling. Requires assistance from GTPase-activating proteins (GAPs) like RP2 and PDE6D, in order to cycle between inactive GDP-bound and active GTP-bound forms. Required for targeting proteins to the cilium, including myristoylated NPHP3 and prenylated INPP5E. Targets NPHP3 to the ciliary membrane by releasing myristoylated NPHP3 from UNC119B cargo adapter into the cilium. Required for PKD1:PKD2 complex targeting from the trans-Golgi network to the cilium. The polypeptide is ADP-ribosylation factor-like protein 3 (Arl3) (Rattus norvegicus (Rat)).